The following is a 229-amino-acid chain: Potassium/proton antiporter CemA (229 aa).

2 helical membrane-spanning segments follow: residues 7 to 27 and 106 to 126; these read LASLRYLACLVFLPWGISISF and IISHLLANFICFATPGAYFIL.

This sequence belongs to the CemA family.

The protein localises to the plastid. Its subcellular location is the chloroplast inner membrane. The catalysed reaction is K(+)(in) + H(+)(out) = K(+)(out) + H(+)(in). Contributes to K(+)/H(+) antiport activity by supporting proton efflux to control proton extrusion and homeostasis in chloroplasts in a light-dependent manner to modulate photosynthesis. Prevents excessive induction of non-photochemical quenching (NPQ) under continuous-light conditions. Indirectly promotes efficient inorganic carbon uptake into chloroplasts. The polypeptide is Potassium/proton antiporter CemA (Cycas taitungensis (Prince sago)).